Consider the following 328-residue polypeptide: Reticulocalbin-3 (328 aa).

The first 20 residues, Met1–Gly20, serve as a signal peptide directing secretion. Residues Pro24–Ala48 form a disordered region. 6 EF-hand domains span residues Glu75–Arg112, His113–Pro148, Lys163–Pro198, Met200–Gly235, Trp241–Asp276, and Gln277–Ser312. Ca(2+)-binding residues include Asp92, Asp94, Trp96, Glu101, Asp126, Asp128, Asp130, Arg132, and Glu137. N-linked (GlcNAc...) asparagine glycosylation is present at Asn140. Ca(2+) is bound by residues Asp176, Asp178, Asp180, Met182, Glu187, Asp213, Asn215, Asp217, Tyr219, Glu224, Asp254, Asn256, Asp258, Arg260, Glu265, Asp290, Asp292, Asp294, Arg296, and Glu301. A Prevents secretion from ER motif is present at residues His325–Leu328.

It belongs to the CREC family. As to quaternary structure, interacts with PCSK6 (immature form including the propeptide); probably involved in the maturation and the secretion of PCSK6. In terms of processing, N-glycosylated. Post-translationally, degraded by PCSK6 and other endoproteases including FURIN and PCSK5.

It localises to the endoplasmic reticulum lumen. Its function is as follows. Probable molecular chaperone assisting protein biosynthesis and transport in the endoplasmic reticulum. Required for the proper biosynthesis and transport of pulmonary surfactant-associated protein A/SP-A, pulmonary surfactant-associated protein D/SP-D and the lipid transporter ABCA3. By regulating both the proper expression and the degradation through the endoplasmic reticulum-associated protein degradation pathway of these proteins plays a crucial role in pulmonary surfactant homeostasis. Has an anti-fibrotic activity by negatively regulating the secretion of type I and type III collagens. This calcium-binding protein also transiently associates with immature PCSK6 and regulates its secretion. This is Reticulocalbin-3 from Rattus norvegicus (Rat).